The primary structure comprises 671 residues: tRNA(Met) cytidine acetyltransferase TmcA (671 aa).

ATP is bound by residues glutamine 180, 202-211 (GRGKSALAGQ), and arginine 319. An N-acetyltransferase domain is found at 356 to 531 (QTLWRSEPET…SGCYTAMALL (176 aa)). Residues 461–463 (IAV), 468–474 (QREGTGR), glutamate 499, and arginine 506 contribute to the acetyl-CoA site.

This sequence belongs to the RNA cytidine acetyltransferase family. TmcA subfamily.

Its subcellular location is the cytoplasm. It catalyses the reaction cytidine(34) in elongator tRNA(Met) + acetyl-CoA + ATP + H2O = N(4)-acetylcytidine(34) in elongator tRNA(Met) + ADP + phosphate + CoA + H(+). In terms of biological role, catalyzes the formation of N(4)-acetylcytidine (ac(4)C) at the wobble position of tRNA(Met), by using acetyl-CoA as an acetyl donor and ATP (or GTP). The sequence is that of tRNA(Met) cytidine acetyltransferase TmcA from Shigella flexneri serotype 5b (strain 8401).